The sequence spans 469 residues: MSQDTLFDKVWELHKVANLPGGSDQIFIGLHLIHEVTSPQAFGALKDKNLKVKFPNRTVATVDHIVPTDNQNRPFRDNLAEQMIDTLEKNCFEHKIKFFNIGSGKQGIVHVVAPELGLTQPGMTIACGDSHTSTHGAFGSIAFGIGTSQVRDVLASQTIAMNKLKVRQIWCENKLSNGIYAKDLVLHIINHLGVKAGVGYAYEFAGPAISALSMEERMTICNMSIEGGARCGYINPDEKTFSYIKDKLCSPQNENWDKAIKWWKSLQSNENSIFDDVIKIDASRVEPTVTWGITPGQSIGISQKIPSLGEIHPNDQFIAGEAYEYMGFKPGQPIKDTPIDVCFIGSCTNGRISDLRVAARVLGNHKIAKNIKAFVVPGSERVAKEAKEEGLDKVFIDAGFQWREPGCSMCLAMNSDKLIGNQVSASSSNRNFKGRQGSPSGRTLLMSPAMVAAAAIKGKVSDVRDFLNK.

[4Fe-4S] cluster contacts are provided by C347, C407, and C410.

The protein belongs to the aconitase/IPM isomerase family. LeuC type 1 subfamily. In terms of assembly, heterodimer of LeuC and LeuD. Requires [4Fe-4S] cluster as cofactor.

The catalysed reaction is (2R,3S)-3-isopropylmalate = (2S)-2-isopropylmalate. The protein operates within amino-acid biosynthesis; L-leucine biosynthesis; L-leucine from 3-methyl-2-oxobutanoate: step 2/4. Functionally, catalyzes the isomerization between 2-isopropylmalate and 3-isopropylmalate, via the formation of 2-isopropylmaleate. The sequence is that of 3-isopropylmalate dehydratase large subunit from Prochlorococcus marinus (strain MIT 9515).